Reading from the N-terminus, the 338-residue chain is NADPH dehydrogenase (338 aa).

22–25 lines the FMN pocket; the sequence is SPMC. Y27 lines the substrate pocket. Residues A59 and Q101 each coordinate FMN. Position 163-166 (163-166) interacts with substrate; it reads HAAH. FMN contacts are provided by residues R214 and 306–307; that span reads GR.

This sequence belongs to the NADH:flavin oxidoreductase/NADH oxidase family. NamA subfamily. In terms of assembly, homotetramer. FMN serves as cofactor.

It carries out the reaction A + NADPH + H(+) = AH2 + NADP(+). Catalyzes the reduction of the double bond of an array of alpha,beta-unsaturated aldehydes and ketones. It also reduces the nitro group of nitroester and nitroaromatic compounds. It could have a role in detoxification processes. In Listeria welshimeri serovar 6b (strain ATCC 35897 / DSM 20650 / CCUG 15529 / CIP 8149 / NCTC 11857 / SLCC 5334 / V8), this protein is NADPH dehydrogenase.